The following is a 196-amino-acid chain: DnaA initiator-associating protein DiaA (196 aa).

In terms of domain architecture, SIS spans 34-196 (LVQSLLNGNK…DNTLFPHQDD (163 aa)).

This sequence belongs to the SIS family. DiaA subfamily. Homotetramer; dimer of dimers.

In terms of biological role, required for the timely initiation of chromosomal replication via direct interactions with the DnaA initiator protein. This Yersinia pseudotuberculosis serotype O:1b (strain IP 31758) protein is DnaA initiator-associating protein DiaA.